The primary structure comprises 129 residues: Small ribosomal subunit protein uS11 (129 aa).

The protein belongs to the universal ribosomal protein uS11 family. Part of the 30S ribosomal subunit. Interacts with proteins S7 and S18. Binds to IF-3.

Its function is as follows. Located on the platform of the 30S subunit, it bridges several disparate RNA helices of the 16S rRNA. Forms part of the Shine-Dalgarno cleft in the 70S ribosome. The chain is Small ribosomal subunit protein uS11 from Cereibacter sphaeroides (strain ATCC 17029 / ATH 2.4.9) (Rhodobacter sphaeroides).